The sequence spans 551 residues: 2,3-bisphosphoglycerate-independent phosphoglycerate mutase (551 aa).

Residues Asp22 and Ser74 each coordinate Mn(2+). Ser74 acts as the Phosphoserine intermediate in catalysis. Substrate-binding positions include His135, 165-166 (RD), Arg201, Arg208, and 281-284 (RGDR). Asp319 serves as a coordination point for Mn(2+). Lys356 serves as a coordination point for substrate. Asp424, His428, Asp465, His466, and His495 together coordinate Mn(2+).

This sequence belongs to the BPG-independent phosphoglycerate mutase family. Monomer. Mn(2+) is required as a cofactor.

Its subcellular location is the cytoplasm. The catalysed reaction is (2R)-2-phosphoglycerate = (2R)-3-phosphoglycerate. The protein operates within carbohydrate degradation; glycolysis; pyruvate from D-glyceraldehyde 3-phosphate: step 3/5. Functionally, catalyzes the interconversion of 2-phosphoglycerate (2-PGA) and 3-phosphoglycerate (3-PGA). The protein is 2,3-bisphosphoglycerate-independent phosphoglycerate mutase of Trypanosoma brucei brucei (strain 927/4 GUTat10.1).